The sequence spans 381 residues: Homoserine O-succinyltransferase (381 aa).

The region spanning 45 to 360 is the AB hydrolase-1 domain; that stretch reads NAVLVCHALN…PHGHDAFLLD (316 aa). Residue serine 151 is the Nucleophile of the active site. Arginine 221 is a binding site for substrate. Active-site residues include aspartate 321 and histidine 354. Aspartate 355 is a binding site for substrate.

It belongs to the AB hydrolase superfamily. MetX family. As to quaternary structure, homodimer.

The protein resides in the cytoplasm. The enzyme catalyses L-homoserine + succinyl-CoA = O-succinyl-L-homoserine + CoA. The protein operates within amino-acid biosynthesis; L-methionine biosynthesis via de novo pathway; O-succinyl-L-homoserine from L-homoserine: step 1/1. Its function is as follows. Transfers a succinyl group from succinyl-CoA to L-homoserine, forming succinyl-L-homoserine. The protein is Homoserine O-succinyltransferase of Burkholderia cenocepacia (strain ATCC BAA-245 / DSM 16553 / LMG 16656 / NCTC 13227 / J2315 / CF5610) (Burkholderia cepacia (strain J2315)).